Reading from the N-terminus, the 115-residue chain is Dolichyl-diphosphooligosaccharide--protein glycosyltransferase subunit DAD1 (115 aa).

Residues 1–31 (MVKSTSKDAQDLFRSLRSAYSATPTNLKIID) lie on the Cytoplasmic side of the membrane. A helical membrane pass occupies residues 32-52 (LYVVFAVFTALIQVVYMALVG). Topologically, residues 53-55 (SFP) are lumenal. Residues 56-76 (FNSFLSGVLSCIGTAVLAVCL) form a helical membrane-spanning segment. At 77-94 (RIQVNKENKEFKDLAPER) the chain is on the cytoplasmic side. A helical transmembrane segment spans residues 95–115 (AFADFVLCNLVLHLVIINFLG).

This sequence belongs to the DAD/OST2 family. As to quaternary structure, component of the oligosaccharyltransferase (OST) complex. In terms of tissue distribution, ubiquitous.

The protein localises to the endoplasmic reticulum membrane. The protein operates within protein modification; protein glycosylation. In terms of biological role, subunit of the oligosaccharyl transferase (OST) complex that catalyzes the initial transfer of a defined glycan (Glc(3)Man(9)GlcNAc(2) in eukaryotes) from the lipid carrier dolichol-pyrophosphate to an asparagine residue within an Asn-X-Ser/Thr consensus motif in nascent polypeptide chains, the first step in protein N-glycosylation. N-glycosylation occurs cotranslationally and the complex associates with the Sec61 complex at the channel-forming translocon complex that mediates protein translocation across the endoplasmic reticulum (ER). All subunits are required for a maximal enzyme activity. The protein is Dolichyl-diphosphooligosaccharide--protein glycosyltransferase subunit DAD1 (DAD1) of Arabidopsis thaliana (Mouse-ear cress).